The following is a 1080-amino-acid chain: MPKRTDLRTILIIGAGPIVIGQACEFDYSGAQACKALRAEGFRVVLVNSNPATIMTDPDMADAVYIEPIHWRTVEKIIAKEKPDALLPTMGGQTALNCALDLADHGVLEKYGVELIGAKREAIRMAEDRELFRVAMQEIGLECPKAEVAKSLERALEIQAKVGFPTIIRPSFTLGGTGGGITYNRQEFEEIIKRGLELSPVHEVLVEESVLGWKEFEMEVVRDASDNCIIVCSIENLDPMGVHTGDSITVAPAQTLSDKEYQRLRDASIAVLRKIGVDTGGSNVQFGIDPQTGRVVVIEMNPRVSRSSALASKATGFPIAKIAAKLAVGYTLDELKNEITGGKMPASFEPSIDYVVTKIPRFAFEKFPQADARLTTQMKSVGEVMAMGRTFAESLQKAVRGLETGKVGLEPTGLDLSSEDDLVVLKRELKAPGAERLFYVADAFRAGFAVADVYALSYIDPWFLDQIEEIVAAEGRLVTDGLGSIDGARLRQLKRIGFSDARIAQLTGTNEVAVRALRRVLKVKPVYKRVDSCAGEFATGTAYLYSTYEEECEAAPSDRRKIMILGGGPNRIGQGIEFDYCCVHAALALREDGFETIMVNCNPETVSTDYDTSDRLYFEPLTLEDVLEIVEVEHPVGVIVQYGGQTPLKLAKALEANGVPVIGTSPESIDLAEDRERFQKLVQQLGLRQPPNCTARTAEEALVLAREIGYPLVVRPSYVLGGRAMEIVYGEADLARYVRDAVKVSNDSPVLLDRFLDNAVEVDVDIIADREGQVLIGGVMEHIEEAGVHSGDSSCSLPPYSLSAATQDDLRRQVIRLAQALNVIGLMNTQFAIQSNDDGSDIVYLLEVNPRASRTVPFVSKATGVPLAKIAARCMTGKTLVEQSVTCEVVPAYYAVKEAIFPFAKLQGVDPILGPEMRSTGEVMGVGRSFAAAFARAQEAGDIRAPQPGRAFVSVRDPDKKRVLPVVLALVERGFGVVATAGTYAWLQQNGVACEVVNKVAEGRPHVVDLIKNGEIVYIINTTEGRAAIADSFSIRREALQHCVTYSTTIAGAKALVNSLEFRGTGPVWSLQELHKELQV.

A carboxyphosphate synthetic domain region spans residues 1-403 (MPKRTDLRTI…SLQKAVRGLE (403 aa)). Residues arginine 129, arginine 169, glycine 175, glycine 176, glutamate 208, valine 210, glutamate 215, glycine 241, valine 242, histidine 243, glutamine 285, and glutamate 299 each contribute to the ATP site. The 196-residue stretch at 133–328 (RVAMQEIGLE…IAKIAAKLAV (196 aa)) folds into the ATP-grasp 1 domain. Mg(2+) contacts are provided by glutamine 285, glutamate 299, and asparagine 301. Positions 285, 299, and 301 each coordinate Mn(2+). Residues 404-554 (TGKVGLEPTG…YSTYEEECEA (151 aa)) form an oligomerization domain region. The carbamoyl phosphate synthetic domain stretch occupies residues 555–942 (APSDRRKIMI…AFARAQEAGD (388 aa)). Positions 679–876 (QKLVQQLGLR…LAKIAARCMT (198 aa)) constitute an ATP-grasp 2 domain. Residues arginine 715, arginine 754, leucine 756, glutamate 761, glycine 787, valine 788, histidine 789, serine 790, glutamine 830, and glutamate 847 each coordinate ATP. Glutamine 830, glutamate 847, and asparagine 849 together coordinate Mg(2+). Glutamine 830, glutamate 847, and asparagine 849 together coordinate Mn(2+). The 138-residue stretch at 943–1080 (IRAPQPGRAF…LQELHKELQV (138 aa)) folds into the MGS-like domain. The segment at 943 to 1080 (IRAPQPGRAF…LQELHKELQV (138 aa)) is allosteric domain.

The protein belongs to the CarB family. Composed of two chains; the small (or glutamine) chain promotes the hydrolysis of glutamine to ammonia, which is used by the large (or ammonia) chain to synthesize carbamoyl phosphate. Tetramer of heterodimers (alpha,beta)4. The cofactor is Mg(2+). Mn(2+) serves as cofactor.

It carries out the reaction hydrogencarbonate + L-glutamine + 2 ATP + H2O = carbamoyl phosphate + L-glutamate + 2 ADP + phosphate + 2 H(+). It catalyses the reaction hydrogencarbonate + NH4(+) + 2 ATP = carbamoyl phosphate + 2 ADP + phosphate + 2 H(+). Its pathway is amino-acid biosynthesis; L-arginine biosynthesis; carbamoyl phosphate from bicarbonate: step 1/1. The protein operates within pyrimidine metabolism; UMP biosynthesis via de novo pathway; (S)-dihydroorotate from bicarbonate: step 1/3. Its function is as follows. Large subunit of the glutamine-dependent carbamoyl phosphate synthetase (CPSase). CPSase catalyzes the formation of carbamoyl phosphate from the ammonia moiety of glutamine, carbonate, and phosphate donated by ATP, constituting the first step of 2 biosynthetic pathways, one leading to arginine and/or urea and the other to pyrimidine nucleotides. The large subunit (synthetase) binds the substrates ammonia (free or transferred from glutamine from the small subunit), hydrogencarbonate and ATP and carries out an ATP-coupled ligase reaction, activating hydrogencarbonate by forming carboxy phosphate which reacts with ammonia to form carbamoyl phosphate. This is Carbamoyl phosphate synthase large chain from Xylella fastidiosa (strain 9a5c).